The following is a 313-amino-acid chain: Protein HEXIM2 (313 aa).

The span at 1 to 13 (MATVNHTNCNTAS) shows a compositional bias: polar residues. Positions 1–78 (MATVNHTNCN…RGSRTQSPGG (78 aa)) are disordered. S28, S52, S75, and S80 each carry phosphoserine. Polar residues predominate over residues 64 to 77 (SSCNIRGSRTQSPG). 3 disordered regions span residues 111–139 (EKQQRDERQSQRASRVREEMFAKGQPLAP), 155–194 (PNLDVLHGPSHSGSGGENEAGDSDGQGRAHGEFQQRDFSE), and 267–313 (QENE…AGDR). Residues 112–131 (KQQRDERQSQRASRVREEMF) show a composition bias toward basic and acidic residues. Residues 139–142 (PYNT) are interaction with P-TEFb. A compositionally biased stretch (basic and acidic residues) spans 179–194 (GQGRAHGEFQQRDFSE). Residues 207–276 (RSKQELVRDY…QENEMWNREG (70 aa)) are a coiled coil. Residues 225–286 (QAEQETRRLR…GYCDQEKPAS (62 aa)) are interaction with CCNT1, HEXIM1 and HEXIM2.

This sequence belongs to the HEXIM family. In terms of assembly, homooligomer and heterooligomer with HEXIM1; probably dimeric. Core component of the 7SK RNP complex, at least composed of 7SK RNA, LARP7, MEPCE, HEXIM1 (or HEXIM2) and P-TEFb (composed of CDK9 and CCNT1/cyclin-T1). Interacts with CCNT2.

Its subcellular location is the nucleus. Functionally, transcriptional regulator which functions as a general RNA polymerase II transcription inhibitor. Core component of the 7SK RNP complex: in cooperation with 7SK snRNA sequesters P-TEFb in a large inactive 7SK snRNP complex preventing RNA polymerase II phosphorylation and subsequent transcriptional elongation. The chain is Protein HEXIM2 (Hexim2) from Mus musculus (Mouse).